We begin with the raw amino-acid sequence, 300 residues long: MARERTVEIREHEVPDPAGGPYGITAGPDGALWFTLVHSGLIARLAPGGEATTHRLDADSGPAIITAGADGALWFTEHRAHRIGRLTTEDGLTEFAPPTPQAGPYGLATGADGALWFTEASAGRIGRITAEGEIAEFGLPVPGAFPSMIAAGPDDAMWFTANQANAIGRMSFDGTAVLHELPTEAAAPVGLALGPDGALWFTEIGAGQIGRVTADGAISEFPLPDRTSRPHAIVARGDELWFTEWGANRVGRIDLDGRIDVHELPTPNSEPHGIAVGQDGALWVALENGALARVAPESHD.

His231 contacts substrate. Glu270 is a binding site for Mg(2+). The active-site Proton acceptor is His272. Glu287 contributes to the Mg(2+) binding site.

Belongs to the Vgb family. Monomer. Mg(2+) is required as a cofactor.

In terms of biological role, inactivates the type B streptogramin antibiotics by linearizing the lactone ring at the ester linkage, generating a free phenylglycine carboxylate and converting the threonyl moiety into 2-amino-butenoic acid. The protein is Virginiamycin B lyase of Saccharopolyspora erythraea (strain ATCC 11635 / DSM 40517 / JCM 4748 / NBRC 13426 / NCIMB 8594 / NRRL 2338).